A 531-amino-acid polypeptide reads, in one-letter code: Putative aldehyde dehydrogenase family 7 member A1 homolog (531 aa).

264–269 (GSSEIG) lines the NAD(+) pocket. Glutamate 286 serves as the catalytic Proton acceptor. The active-site Nucleophile is cysteine 320.

This sequence belongs to the aldehyde dehydrogenase family. Homotetramer.

The catalysed reaction is an aldehyde + NAD(+) + H2O = a carboxylate + NADH + 2 H(+). This Caenorhabditis elegans protein is Putative aldehyde dehydrogenase family 7 member A1 homolog (alh-9).